The following is a 189-amino-acid chain: Potassium-transporting ATPase KdpC subunit (189 aa).

Residues Pro-6–Val-26 form a helical membrane-spanning segment.

The protein belongs to the KdpC family. The system is composed of three essential subunits: KdpA, KdpB and KdpC.

The protein localises to the cell inner membrane. Part of the high-affinity ATP-driven potassium transport (or Kdp) system, which catalyzes the hydrolysis of ATP coupled with the electrogenic transport of potassium into the cytoplasm. This subunit acts as a catalytic chaperone that increases the ATP-binding affinity of the ATP-hydrolyzing subunit KdpB by the formation of a transient KdpB/KdpC/ATP ternary complex. The sequence is that of Potassium-transporting ATPase KdpC subunit from Geobacter sulfurreducens (strain ATCC 51573 / DSM 12127 / PCA).